The sequence spans 239 residues: Ribose-5-phosphate isomerase A (239 aa).

Residues 40–43 (SGST), 96–99 (DGAD), and 110–113 (KGGG) each bind substrate. The Proton acceptor role is filled by E119. K137 is a substrate binding site.

It belongs to the ribose 5-phosphate isomerase family. In terms of assembly, homodimer.

The enzyme catalyses aldehydo-D-ribose 5-phosphate = D-ribulose 5-phosphate. The protein operates within carbohydrate degradation; pentose phosphate pathway; D-ribose 5-phosphate from D-ribulose 5-phosphate (non-oxidative stage): step 1/1. Functionally, catalyzes the reversible conversion of ribose-5-phosphate to ribulose 5-phosphate. This chain is Ribose-5-phosphate isomerase A, found in Methanococcus maripaludis (strain C7 / ATCC BAA-1331).